The following is a 304-amino-acid chain: Release factor glutamine methyltransferase (304 aa).

Residues Asp-144 and Asn-188 each contribute to the S-adenosyl-L-methionine site. Residue 188–191 (NPPY) coordinates substrate.

Belongs to the protein N5-glutamine methyltransferase family. PrmC subfamily.

The enzyme catalyses L-glutaminyl-[peptide chain release factor] + S-adenosyl-L-methionine = N(5)-methyl-L-glutaminyl-[peptide chain release factor] + S-adenosyl-L-homocysteine + H(+). Its function is as follows. Methylates the class 1 translation termination release factors RF1/PrfA and RF2/PrfB on the glutamine residue of the universally conserved GGQ motif. This Mycobacterium tuberculosis (strain CDC 1551 / Oshkosh) protein is Release factor glutamine methyltransferase.